The primary structure comprises 526 residues: MLLRILTFLAVCQVTTSHKILMFSPTASKSHMISQGRIADELANAGHEVVNFEPDFLNLTDKFVPCKKCRRWPVTGLNNYKFKKIQNGLSGDVFQQSSIWSKIFNTDSDPYQDEYTNMCEEMVTNKELIEKLKKEKFDAYFGEQIHLCGMGLAHLIGIKHRFWIASCTMSVSMRDSLGIPTPSSLIPFMSTLDATPAPFWQRAKNFVLQMAHIRDEYRDVVLTNDMFKKNFGSDFPCVEFLAKTSDLIFVSTDELLEIQAPTLSNVVHIGGLGLSSEGGGLDEKFVKIMEKGKGVILFSLGTIANTTNLPPTIMENLMKITQKFKDYEFIIKVDKFDRRSFDLAEGLSNVLVVDWVPQTAVLAHPRLKAFITHAGYNSLMESAYAGVPVILIPFMFDQPRNGRSVERKGWGILRDRFQLIKDPDAIEGAIKEILVNPTYQEKANRLKKLMRSKPQSASERLVKMTNWVLENDGVEELQYEGKHMDFFTFYNLDIIITAASIPVLIFIVLRISNISIITSSPKNKKD.

The first 17 residues, 1 to 17, serve as a signal peptide directing secretion; that stretch reads MLLRILTFLAVCQVTTS. N58 and N305 each carry an N-linked (GlcNAc...) asparagine glycan. A helical transmembrane segment spans residues 489-509; the sequence is FYNLDIIITAASIPVLIFIVL. N513 is a glycosylation site (N-linked (GlcNAc...) asparagine).

The protein belongs to the UDP-glycosyltransferase family. In terms of assembly, interacts with cmd-1 in the presence of Ca(2+).

Its subcellular location is the membrane. The catalysed reaction is glucuronate acceptor + UDP-alpha-D-glucuronate = acceptor beta-D-glucuronoside + UDP + H(+). This chain is Putative UDP-glucuronosyltransferase ugt-48 (ugt-48), found in Caenorhabditis elegans.